The following is a 167-amino-acid chain: Protein-lysine myristoyltransferase RtxC (167 aa).

Active-site residues include H20 and D89.

Belongs to the RTX toxin acyltransferase family.

It localises to the cytoplasm. It catalyses the reaction tetradecanoyl-[ACP] + L-lysyl-[protein] = N(6)-tetradecanoyl-L-lysyl-[protein] + holo-[ACP] + H(+). Its function is as follows. Protein-lysine myristoyltransferase that catalyzes myristoylation of the protoxin (RtxA) at two internal lysine residues, thereby converting it to the active toxin. The polypeptide is Protein-lysine myristoyltransferase RtxC (Kingella kingae).